Reading from the N-terminus, the 121-residue chain is Large ribosomal subunit protein bL12 (121 aa).

Belongs to the bacterial ribosomal protein bL12 family. In terms of assembly, homodimer. Part of the ribosomal stalk of the 50S ribosomal subunit. Forms a multimeric L10(L12)X complex, where L10 forms an elongated spine to which 2 to 4 L12 dimers bind in a sequential fashion. Binds GTP-bound translation factors.

Functionally, forms part of the ribosomal stalk which helps the ribosome interact with GTP-bound translation factors. Is thus essential for accurate translation. In Streptococcus equi subsp. equi (strain 4047), this protein is Large ribosomal subunit protein bL12.